A 184-amino-acid polypeptide reads, in one-letter code: ATP synthase subunit b, chloroplastic (184 aa).

Residues 27–49 (LATNLINLSVVLGVLIFFGKGVL) form a helical membrane-spanning segment.

The protein belongs to the ATPase B chain family. In terms of assembly, F-type ATPases have 2 components, F(1) - the catalytic core - and F(0) - the membrane proton channel. F(1) has five subunits: alpha(3), beta(3), gamma(1), delta(1), epsilon(1). F(0) has four main subunits: a(1), b(1), b'(1) and c(10-14). The alpha and beta chains form an alternating ring which encloses part of the gamma chain. F(1) is attached to F(0) by a central stalk formed by the gamma and epsilon chains, while a peripheral stalk is formed by the delta, b and b' chains.

It is found in the plastid. The protein resides in the chloroplast thylakoid membrane. Functionally, f(1)F(0) ATP synthase produces ATP from ADP in the presence of a proton or sodium gradient. F-type ATPases consist of two structural domains, F(1) containing the extramembraneous catalytic core and F(0) containing the membrane proton channel, linked together by a central stalk and a peripheral stalk. During catalysis, ATP synthesis in the catalytic domain of F(1) is coupled via a rotary mechanism of the central stalk subunits to proton translocation. Component of the F(0) channel, it forms part of the peripheral stalk, linking F(1) to F(0). This Manihot esculenta (Cassava) protein is ATP synthase subunit b, chloroplastic.